We begin with the raw amino-acid sequence, 300 residues long: 2-keto-3-deoxy-L-fuconate dehydrogenase (300 aa).

NAD(+) is bound by residues 63–90 (LITA…IATD) and Asp112. Arg198 contributes to the substrate binding site. Catalysis depends on Tyr201, which acts as the Proton acceptor. NAD(+) is bound by residues Lys205 and 234–238 (IKTPS). Positions 242 and 260 each coordinate substrate.

The protein belongs to the short-chain dehydrogenases/reductases (SDR) family.

Its function is as follows. Plays a role in the catabolism of L-fucose. Catalyzes the NAD(+)-dependent oxidation of 2-keo-3-deoxy-L-fuconate to 2,4-diketo-3-deoxy-L-fuconate. The chain is 2-keto-3-deoxy-L-fuconate dehydrogenase from Xanthomonas campestris pv. campestris (strain ATCC 33913 / DSM 3586 / NCPPB 528 / LMG 568 / P 25).